Consider the following 141-residue polypeptide: Large ribosomal subunit protein uL11 (141 aa).

The protein belongs to the universal ribosomal protein uL11 family. Part of the ribosomal stalk of the 50S ribosomal subunit. Interacts with L10 and the large rRNA to form the base of the stalk. L10 forms an elongated spine to which L12 dimers bind in a sequential fashion forming a multimeric L10(L12)X complex. One or more lysine residues are methylated.

Forms part of the ribosomal stalk which helps the ribosome interact with GTP-bound translation factors. This is Large ribosomal subunit protein uL11 from Chlamydia abortus (strain DSM 27085 / S26/3) (Chlamydophila abortus).